Reading from the N-terminus, the 353-residue chain is MSYNVTIEPTGEVIEVEDGQTILQAALRQGVWLPFACGHGTCATCKVQVVEGEVDIGEASPFALMDIERDERKVLACCAIPLSDLVIEADVDADPDFLGHPVEDYRGVVSALVDLSPTIKGLHIKLDRPMPFQAGQYVNLALPGIDGTRAFSLANPPSRNDEVELHVRLVEGGAATGFIHKQLKVGDAVELSGPYGQFFVRDSQAGDLIFIAGGSGLSSPQSMILDLLERGDTRRITLFQGARNRAELYNCELFEELAARHPNFSYVPALNQANDDPEWQGFKGFVHDAAKAHFDGRFGGQKAYLCGPPPMIDAAITTLMQGRLFERDIFMERFYTAADGAGESSRSALFKRI.

A 2Fe-2S ferredoxin-type domain is found at 3–93; the sequence is YNVTIEPTGE…DLVIEADVDA (91 aa). [2Fe-2S] cluster contacts are provided by C37, C42, C45, and C77. The 100-residue stretch at 102-201 folds into the FAD-binding FR-type domain; it reads VEDYRGVVSA…SGPYGQFFVR (100 aa).

As to quaternary structure, the multicomponent enzyme phenol hydroxylase is formed by DmpL (P1 component), DmpM (P2 component), DmpN (P3 component), DmpO (P4 component) and DmpP (P5 component). Requires FAD as cofactor. The cofactor is [2Fe-2S] cluster.

It carries out the reaction phenol + NADH + O2 + H(+) = catechol + NAD(+) + H2O. It participates in aromatic compound metabolism; phenol degradation. Its function is as follows. Part of a multicomponent enzyme which catalyzes the degradation of phenol and some of its methylated derivatives. DmpP probably transfers electrons from NADH, via FAD and the iron-sulfur center, to the oxygenase component of the complex. Required for growth on phenol and for in vitro phenol hydroxylase activity. The polypeptide is Phenol 2-monooxygenase, reductase component DmpP (Pseudomonas sp. (strain CF600)).